We begin with the raw amino-acid sequence, 518 residues long: MATSTTGSTLLQPLSNAVRLPVDQVNFVVCQLFALLAAIWFRTYLHSSKTSPFIRHVVATLLGLYLALFCFGWYALHFVIQSGISYYLMIIIGVENMHKYCFVFALGYLTVCQITRVYIFDYGQYSADFSGPMMIITQKITSLAFEIHDGMFRKNEDLTPSQRCLAVRRMPSLLEYLSYNCNFMGILAGPLCSYKDYITFIEGRSYQLQQSEANGKEDTKYEQTDPSPNIAVAQKLLICGLSLLFHMTITKTLPVEYNIDENFRATASWPVRVFYLYLSLMAARPKYYFAWTLADAINNAAGFGFRGYDKNGVTRWDLISNLRIQQIESSTSFKMFLDNWNIQTALWLKRVCYERATFSPTIQTFILSAIWHGVYPGYYLTFLTGVLMTLAARAIRNNIRHYFVESPAVKLCYDIITWMTTQVAISYTVVPFVLLSVKPSFTFYSSCYFCLHIASILVLLVFPLKRTQKGNKQHESIQPVWSKKLEEENLLQKNSYSTTNNSFSQKEEITCRYQALKQ.

The next 6 membrane-spanning stretches (helical) occupy residues 21–41, 60–80, 87–107, 183–203, 230–250, and 267–283; these read PVDQ…AIWF, TLLG…HFVI, YLMI…FALG, FMGI…FIEG, IAVA…MTIT, and ASWP…LMAA. Residues N341 and H372 contribute to the active site. 3 consecutive transmembrane segments (helical) span residues 365–385, 415–435, and 443–463; these read FILS…FLTG, IITW…FVLL, and FYSS…LVFP.

The protein belongs to the membrane-bound acyltransferase family.

It is found in the endoplasmic reticulum membrane. It catalyses the reaction a 1-acyl-sn-glycero-3-phosphocholine + an acyl-CoA = a 1,2-diacyl-sn-glycero-3-phosphocholine + CoA. It carries out the reaction a 1-acyl-sn-glycero-3-phosphoethanolamine + an acyl-CoA = a 1,2-diacyl-sn-glycero-3-phosphoethanolamine + CoA. The enzyme catalyses a 1-acyl-sn-glycero-3-phosphate + an acyl-CoA = a 1,2-diacyl-sn-glycero-3-phosphate + CoA. The catalysed reaction is (9Z)-hexadecenoyl-CoA + 1-hexadecanoyl-sn-glycero-3-phosphocholine = 1-hexadecanoyl-2-(9Z-hexadecenoyl)-sn-glycero-3-phosphocholine + CoA. It catalyses the reaction 1-hexadecanoyl-sn-glycero-3-phosphoethanolamine + (9Z)-octadecenoyl-CoA = 1-hexadecanoyl-2-(9Z-octadecenoyl)-sn-glycero-3-phosphoethanolamine + CoA. It carries out the reaction 1-hexadecanoyl-sn-glycero-3-phosphoethanolamine + (9Z)-hexadecenoyl-CoA = 1-hexadecanoyl-2-(9Z)-hexadecenoyl-sn-glycero-3-phosphoethanolamine + CoA. The enzyme catalyses 1-(9Z-octadecenoyl)-sn-glycero-3-phospho-L-serine + hexadecanoyl-CoA = 1-(9Z)-octadecenoyl-2-hexadecanoyl-sn-glycero-3-phosphoserine + CoA. The catalysed reaction is (9Z,12Z)-octadecadienoyl-CoA + 1-hexadecanoyl-sn-glycero-3-phosphocholine = 1-hexadecanoyl-2-(9Z,12Z-octadecadienoyl)-sn-glycero-3-phosphocholine + CoA. It catalyses the reaction 1-hexadecanoyl-sn-glycero-3-phosphocholine + (9Z)-octadecenoyl-CoA = 1-hexadecanoyl-2-(9Z-octadecenoyl)-sn-glycero-3-phosphocholine + CoA. It carries out the reaction 1-hexadecanoyl-sn-glycero-3-phosphate + (9Z)-hexadecenoyl-CoA = 1-hexadecanoyl-2-[(9Z)-hexadec-9-enoyl]-sn-glycero-3-phosphate + CoA. The enzyme catalyses 1-hexadecanoyl-sn-glycero-3-phosphate + (9Z)-octadecenoyl-CoA = 1-hexadecanoyl-2-(9Z-octadecenoyl)-sn-glycero-3-phosphate + CoA. The catalysed reaction is a 1-O-(1Z-alkenyl)-sn-glycero-3-phosphocholine + (9Z)-octadecenoyl-CoA = 1-O-(1Z)-alkenyl-2-(9Z)-octadecenoyl-sn-glycero-3-phosphocholine + CoA. It catalyses the reaction a 1-O-(1Z-alkenyl)-sn-glycero-3-phosphoethanolamine + (9Z)-octadecenoyl-CoA = 1-O-(1Z)-alkenyl-2-(9Z)-octadecenoyl-sn-glycero-3-phosphoethanolamine + CoA. It carries out the reaction 1-octadecanoyl-sn-glycero-3-phosphoethanolamine + (9Z)-octadecenoyl-CoA = 1-octadecanoyl-2-(9Z-octadecenoyl)-sn-glycero-3-phosphoethanolamine + CoA. The enzyme catalyses 1-octadecanoyl-sn-glycero-3-phosphocholine + (9Z)-octadecenoyl-CoA = 1-octadecanoyl-2-(9Z-octadecenoyl)-sn-glycero-3-phosphocholine + CoA. The catalysed reaction is 1-(9Z-octadecenoyl)-sn-glycero-3-phosphoethanolamine + (9Z)-octadecenoyl-CoA = 1,2-di-(9Z-octadecenoyl)-sn-glycero-3-phosphoethanolamine + CoA. It participates in lipid metabolism; phospholipid metabolism. Functionally, acyltransferase which catalyzes the transfer of an acyl group from an acyl-CoA to a lysophospholipid leading to the production of a phospholipid and participates in the reacylation step of the phospholipid remodeling pathway also known as the Lands cycle. May catalyze preferentially the acylation of lysophosphatidylethanolamine (1-acyl-sn-glycero-3-phosphoethanolamine or LPE) and lysophosphatidic acid (LPA) and to a lesser extend lysophosphatidylcholine (LPC) and lysophosphatidylserine (LPS). Prefers oleoyl-CoA as the acyl donor. The sequence is that of Membrane-bound glycerophospholipid O-acyltransferase 2 from Gallus gallus (Chicken).